The chain runs to 297 residues: Palmitoyl-protein thioesterase ABHD10, mitochondrial (297 aa).

Residues 1–43 (MAAWAPCRRWGWAAVSFGRHPGLSASLARKPPRAWWLSACRQK) constitute a mitochondrion transit peptide. One can recognise an AB hydrolase-1 domain in the interval 69-196 (IIFIPGYLSN…EIEMKGEWTL (128 aa)). Catalysis depends on charge relay system residues serine 143, aspartate 240, and histidine 270.

This sequence belongs to the AB hydrolase superfamily.

The protein localises to the mitochondrion. The catalysed reaction is S-hexadecanoyl-L-cysteinyl-[protein] + H2O = L-cysteinyl-[protein] + hexadecanoate + H(+). The enzyme catalyses mycophenolic acid O-acyl-beta-D-glucuronide + H2O = mycophenolate + D-glucuronate + H(+). With respect to regulation, inhibited by palmostatin-B. In terms of biological role, acts as an acyl-protein thioesterase that hydrolyzes fatty acids from acylated residues in proteins. Regulates the mitochondrial S-depalmitoylation of the nucleophilic active site residue of peroxiredoxin-5/PRDX5, a key antioxidant protein, therefore modulating mitochondrial antioxidant ability. Also catalyzes the deglucuronidation of mycophenolic acid acyl-glucuronide, an active metabolite of the immunosuppressant drug mycophenolate. The polypeptide is Palmitoyl-protein thioesterase ABHD10, mitochondrial (Mus musculus (Mouse)).